A 461-amino-acid chain; its full sequence is Cysteine--tRNA ligase (461 aa).

Zn(2+) is bound at residue C28. The 'HIGH' region motif lies at 30-40; the sequence is ITVYDLCHIGH. Residues C209, H234, and E238 each coordinate Zn(2+). The 'KMSKS' region motif lies at 266-270; it reads KMSKS. K269 is an ATP binding site.

Belongs to the class-I aminoacyl-tRNA synthetase family. As to quaternary structure, monomer. Zn(2+) is required as a cofactor.

It localises to the cytoplasm. It catalyses the reaction tRNA(Cys) + L-cysteine + ATP = L-cysteinyl-tRNA(Cys) + AMP + diphosphate. The protein is Cysteine--tRNA ligase of Escherichia coli O17:K52:H18 (strain UMN026 / ExPEC).